Reading from the N-terminus, the 81-residue chain is Ferredoxin (81 aa).

Positions 2–30 constitute a 4Fe-4S ferredoxin-type domain; it reads KYTIVDKETCIACGACGAAAPDIYDYDED. 4 residues coordinate [4Fe-4S] cluster: cysteine 11, cysteine 14, cysteine 17, and cysteine 61.

The cofactor is [4Fe-4S] cluster.

In terms of biological role, ferredoxins are iron-sulfur proteins that transfer electrons in a wide variety of metabolic reactions. The polypeptide is Ferredoxin (fer) (Geobacillus stearothermophilus (Bacillus stearothermophilus)).